The primary structure comprises 342 residues: MTLKPVREVSPGSQEGEERLEQSLRPATFEEYVGQEKLVENFRVYAKAARARGEALDHVLLSGPPGLGKTSLAHILARELGVALHVTSGPALVKKGDLAGLLTALAPRDILFIDEIHRLSPAVEEALYPAMEDYRFDVVLGAGLGAQTMEMKLERFTLVGATTRTGLLASPLRDRFPIQERLGYYEPTELREIAVRAARKLALPVDPAGAEELARRARGTPRIAIRLLQRARDFAQVEGDGTLTREIVETTLERLEVDGRGLDAMDRRILAVVLDTFGGGPVGIDAVAAAVGEERDTLEDVYEPFLVREGFLARTPRGRVALPPAYAHLGRERPQGKQGSLI.

The segment at 1–22 (MTLKPVREVSPGSQEGEERLEQ) is disordered. The tract at residues 1–185 (MTLKPVREVS…FPIQERLGYY (185 aa)) is large ATPase domain (RuvB-L). Residues Leu24, Arg25, Gly66, Lys69, Thr70, Ser71, 132–134 (EDY), Arg175, Tyr185, and Arg222 each bind ATP. Thr70 is a Mg(2+) binding site. A small ATPAse domain (RuvB-S) region spans residues 186 to 256 (EPTELREIAV…IVETTLERLE (71 aa)). The interval 259-342 (GRGLDAMDRR…RPQGKQGSLI (84 aa)) is head domain (RuvB-H). Positions 295, 314, and 319 each coordinate DNA.

It belongs to the RuvB family. In terms of assembly, homohexamer. Forms an RuvA(8)-RuvB(12)-Holliday junction (HJ) complex. HJ DNA is sandwiched between 2 RuvA tetramers; dsDNA enters through RuvA and exits via RuvB. An RuvB hexamer assembles on each DNA strand where it exits the tetramer. Each RuvB hexamer is contacted by two RuvA subunits (via domain III) on 2 adjacent RuvB subunits; this complex drives branch migration. In the full resolvosome a probable DNA-RuvA(4)-RuvB(12)-RuvC(2) complex forms which resolves the HJ.

Its subcellular location is the cytoplasm. It catalyses the reaction ATP + H2O = ADP + phosphate + H(+). Functionally, the RuvA-RuvB-RuvC complex processes Holliday junction (HJ) DNA during genetic recombination and DNA repair, while the RuvA-RuvB complex plays an important role in the rescue of blocked DNA replication forks via replication fork reversal (RFR). RuvA specifically binds to HJ cruciform DNA, conferring on it an open structure. The RuvB hexamer acts as an ATP-dependent pump, pulling dsDNA into and through the RuvAB complex. RuvB forms 2 homohexamers on either side of HJ DNA bound by 1 or 2 RuvA tetramers; 4 subunits per hexamer contact DNA at a time. Coordinated motions by a converter formed by DNA-disengaged RuvB subunits stimulates ATP hydrolysis and nucleotide exchange. Immobilization of the converter enables RuvB to convert the ATP-contained energy into a lever motion, pulling 2 nucleotides of DNA out of the RuvA tetramer per ATP hydrolyzed, thus driving DNA branch migration. The RuvB motors rotate together with the DNA substrate, which together with the progressing nucleotide cycle form the mechanistic basis for DNA recombination by continuous HJ branch migration. Branch migration allows RuvC to scan DNA until it finds its consensus sequence, where it cleaves and resolves cruciform DNA. The sequence is that of Holliday junction branch migration complex subunit RuvB from Anaeromyxobacter sp. (strain Fw109-5).